A 721-amino-acid chain; its full sequence is Glycine--tRNA ligase beta subunit (721 aa).

It belongs to the class-II aminoacyl-tRNA synthetase family. As to quaternary structure, tetramer of two alpha and two beta subunits.

The protein localises to the cytoplasm. The enzyme catalyses tRNA(Gly) + glycine + ATP = glycyl-tRNA(Gly) + AMP + diphosphate. The polypeptide is Glycine--tRNA ligase beta subunit (Sinorhizobium fredii (strain NBRC 101917 / NGR234)).